A 72-amino-acid polypeptide reads, in one-letter code: Metallothionein-like protein 1B (72 aa).

It belongs to the metallothionein superfamily. Type 15 family. As to expression, expressed in leaves of mature plants.

In terms of biological role, metallothioneins have a high content of cysteine residues that bind various heavy metals. Functions as a metal chelator of nickel (Ni), cadmium (Cd), zinc (Zn) and copper (Cu). Possesses higher affinity for Ni and Cd ions compared to Zn and Cu ions. This chain is Metallothionein-like protein 1B (MT1B), found in Oryza sativa subsp. japonica (Rice).